Consider the following 203-residue polypeptide: ATP-dependent Clp protease proteolytic subunit (203 aa).

Serine 100 functions as the Nucleophile in the catalytic mechanism. Histidine 125 is a catalytic residue.

The protein belongs to the peptidase S14 family. In terms of assembly, fourteen ClpP subunits assemble into 2 heptameric rings which stack back to back to give a disk-like structure with a central cavity, resembling the structure of eukaryotic proteasomes.

Its subcellular location is the cytoplasm. It catalyses the reaction Hydrolysis of proteins to small peptides in the presence of ATP and magnesium. alpha-casein is the usual test substrate. In the absence of ATP, only oligopeptides shorter than five residues are hydrolyzed (such as succinyl-Leu-Tyr-|-NHMec, and Leu-Tyr-Leu-|-Tyr-Trp, in which cleavage of the -Tyr-|-Leu- and -Tyr-|-Trp bonds also occurs).. Cleaves peptides in various proteins in a process that requires ATP hydrolysis. Has a chymotrypsin-like activity. Plays a major role in the degradation of misfolded proteins. The polypeptide is ATP-dependent Clp protease proteolytic subunit (Anaeromyxobacter sp. (strain K)).